A 302-amino-acid chain; its full sequence is MILLNNSHKLLALYKSLARSIPESLKVYGSVYHINHGNPFNMEVLVDSWPEYQMVIIRPQKQEMTDDMDSYTNVYRMFSKEPQKSEEVLKNCEIVNWKQRLQIQGLQESLGEGIRVATFSKSVKVEHSRALLLVTEDILKLNASSKSKLGSWAETGHPDDEFESETPNFKYAQLDVSYSGLVNDNWKRGKNERSLHYIKRCIEDLPAACMLGPEGVPVSWVTMDPSCEVGMAYSMEKYRRTGNMARVMVRYMKYLRQKNIPFYISVLEENEDSRRFVGQFGFFEASCEWHQWTCYPQNLVPF.

It belongs to the glycine N-acyltransferase family. As to expression, expressed in liver and kidney and, at lower levels, in pancreas, testis, ovary and stomach.

It catalyses the reaction an acyl-CoA + L-glutamine = an N(2)-acyl-L-glutamine + CoA + H(+). Its function is as follows. Acyltransferase which transfers an acyl group to the N-terminus of glutamine. Can use phenylacetyl-CoA as an acyl donor. The chain is Glycine N-acyltransferase-like protein 1 from Homo sapiens (Human).